The chain runs to 29 residues: Myosin heavy chain, muscle (29 aa).

The segment covering 1–16 (SKYESEGVARSEELQE) has biased composition (basic and acidic residues). Residues 1 to 29 (SKYESEGVARSEELQEVHQAFADAGRKPI) form a disordered region.

Muscle myosin is a hexameric protein that consists of 2 heavy chain subunits (MHC), 2 alkali light chain subunits (MLC) and 2 regulatory light chain subunits (MLC-2).

The protein localises to the cytoplasm. It localises to the myofibril. Functionally, muscle contraction. The protein is Myosin heavy chain, muscle of Bombyx mori (Silk moth).